Consider the following 537-residue polypeptide: Prolyl 4-hydroxylase subunit alpha-2 (537 aa).

An N-terminal signal peptide occupies residues 1–23 (MKLQVLVLVLLMSWFGVLSWVQA). N-linked (GlcNAc...) asparagine glycosylation is present at asparagine 117. The stretch at 209–242 (SLVLDYLSYAVFQLGDLHRAVELTRRLLSLDPSH) is one TPR repeat. Residue asparagine 266 is glycosylated (N-linked (GlcNAc...) asparagine). The region spanning 414-522 (TAELLQVANY…KWVSNKWFHE (109 aa)) is the Fe2OG dioxygenase domain. Fe cation contacts are provided by histidine 432 and aspartate 434. At lysine 482 the chain carries N6-succinyllysine. Histidine 503 provides a ligand contact to Fe cation. Lysine 513 is a binding site for 2-oxoglutarate.

This sequence belongs to the P4HA family. As to quaternary structure, heterotetramer of two alpha-2 chains and two beta chains (P4HB) (the beta chain is the multi-functional PDI), where P4HB plays the role of a structural subunit; this tetramer catalyzes the formation of 4-hydroxyproline in collagen. Fe(2+) serves as cofactor. The cofactor is L-ascorbate. In terms of tissue distribution, expressed at least in brain, heart and lung.

The protein localises to the endoplasmic reticulum lumen. The enzyme catalyses L-prolyl-[collagen] + 2-oxoglutarate + O2 = trans-4-hydroxy-L-prolyl-[collagen] + succinate + CO2. With respect to regulation, inhibited by poly(L-proline) only at very high concentrations. In terms of biological role, catalyzes the post-translational formation of 4-hydroxyproline in -Xaa-Pro-Gly- sequences in collagens and other proteins. The protein is Prolyl 4-hydroxylase subunit alpha-2 (P4ha2) of Mus musculus (Mouse).